A 147-amino-acid chain; its full sequence is Hemoglobin subunit delta (147 aa).

The 145-residue stretch at 3 to 147 (HLTPEEKALV…VANALAHKYH (145 aa)) folds into the Globin domain. Ser-51 is subject to Phosphoserine. The heme b site is built by His-64 and His-93.

The protein belongs to the globin family. Heterotetramer of two delta chains and two alpha chains. As to expression, red blood cells.

This chain is Hemoglobin subunit delta (HBD), found in Trichechus manatus (Caribbean manatee).